A 125-amino-acid chain; its full sequence is Large ribosomal subunit protein bL20 (125 aa).

The protein belongs to the bacterial ribosomal protein bL20 family.

Functionally, binds directly to 23S ribosomal RNA and is necessary for the in vitro assembly process of the 50S ribosomal subunit. It is not involved in the protein synthesizing functions of that subunit. The sequence is that of Large ribosomal subunit protein bL20 from Zymomonas mobilis subsp. mobilis (strain ATCC 31821 / ZM4 / CP4).